The sequence spans 366 residues: Galactoside alpha-(1,2)-fucosyltransferase 1 (366 aa).

Residues 1 to 8 (MWPLSHRH) lie on the Cytoplasmic side of the membrane. Residues 9–25 (LCLAFLLVCVLSAISFF) form a helical; Signal-anchor for type II membrane protein membrane-spanning segment. Topologically, residues 26-366 (LHIHQDSIRH…LSPLWTLAEP (341 aa)) are lumenal. Residues Asn-66, Asn-302, and Asn-328 are each glycosylated (N-linked (GlcNAc...) asparagine).

This sequence belongs to the glycosyltransferase 11 family.

The protein localises to the golgi apparatus. It is found in the golgi stack membrane. The enzyme catalyses a beta-D-galactosyl-(1-&gt;4)-N-acetyl-beta-D-glucosaminyl derivative + GDP-beta-L-fucose = an alpha-L-Fuc-(1-&gt;2)-beta-D-Gal-(1-&gt;4)-beta-D-GlcNAc derivative + GDP + H(+). It carries out the reaction a ganglioside GA1 + GDP-beta-L-fucose = a ganglioside Fuc-GA1 + GDP + H(+). It catalyses the reaction a beta-D-Gal-(1-&gt;3)-beta-D-GlcNAc-(1-&gt;3)-beta-D-Gal-(1-&gt;4)-beta-D-Glc-(1&lt;-&gt;1')-Cer(d18:1(4E)) + GDP-beta-L-fucose = alpha-L-fucosyl-(1-&gt;2)- beta-D-galactosyl-(1-&gt;3)-N-acetyl-beta-D-glucosaminyl-(1-&gt;3)-beta-D-galactosyl-(1-&gt;4)-beta-D-glucosyl-(1&lt;-&gt;1')-N-acylsphing-4-enine + GDP + H(+). The catalysed reaction is a neolactoside nLc4Cer(d18:1(4E)) + GDP-beta-L-fucose = a neolactoside IV(2)-alpha-Fuc-nLc4Cer(d18:1(4E)) + GDP + H(+). The enzyme catalyses a ganglioside GM1 + GDP-beta-L-fucose = a ganglioside Fuc-GM1 + GDP + H(+). It carries out the reaction beta-D-galactosyl-(1-&gt;3)-N-acetyl-D-galactosamine + GDP-beta-L-fucose = alpha-L-fucosyl-(1-&gt;2)-beta-D-galactosyl-(1-&gt;3)-N-acetyl-D-galactosamine + GDP + H(+). The protein operates within protein modification; protein glycosylation. Catalyzes the transfer of L-fucose, from a guanosine diphosphate-beta-L-fucose, to the terminal galactose residue of glycoconjugates through an alpha(1,2) linkage leading to H antigen synthesis that is an intermediate substrate in the synthesis of ABO blood group antigens. H antigen is essential for maturation of the glomerular layer of the main olfactory bulb, in cell migration and early cell-cell contacts during tumor associated angiogenesis. Preferentially fucosylates soluble lactose and to a lesser extent fucosylates glycolipids gangliosides GA1 and GM1a. In Aotus azarae (Azara's night monkey), this protein is Galactoside alpha-(1,2)-fucosyltransferase 1.